The primary structure comprises 90 residues: UPF0237 protein MK1213 (90 aa).

The region spanning 5–79 is the ACT domain; sequence VVTVIGADRP…EELGVDVIVQ (75 aa).

The protein belongs to the UPF0237 family.

This chain is UPF0237 protein MK1213, found in Methanopyrus kandleri (strain AV19 / DSM 6324 / JCM 9639 / NBRC 100938).